Reading from the N-terminus, the 293-residue chain is Pyridoxal 5'-phosphate synthase subunit PdxS (293 aa).

Aspartate 23 lines the D-ribose 5-phosphate pocket. Catalysis depends on lysine 80, which acts as the Schiff-base intermediate with D-ribose 5-phosphate. Glycine 152 serves as a coordination point for D-ribose 5-phosphate. Residue arginine 164 participates in D-glyceraldehyde 3-phosphate binding. Residues glycine 213 and 234-235 contribute to the D-ribose 5-phosphate site; that span reads GS.

It belongs to the PdxS/SNZ family. In terms of assembly, in the presence of PdxT, forms a dodecamer of heterodimers.

The catalysed reaction is aldehydo-D-ribose 5-phosphate + D-glyceraldehyde 3-phosphate + L-glutamine = pyridoxal 5'-phosphate + L-glutamate + phosphate + 3 H2O + H(+). It functions in the pathway cofactor biosynthesis; pyridoxal 5'-phosphate biosynthesis. Its function is as follows. Catalyzes the formation of pyridoxal 5'-phosphate from ribose 5-phosphate (RBP), glyceraldehyde 3-phosphate (G3P) and ammonia. The ammonia is provided by the PdxT subunit. Can also use ribulose 5-phosphate and dihydroxyacetone phosphate as substrates, resulting from enzyme-catalyzed isomerization of RBP and G3P, respectively. This chain is Pyridoxal 5'-phosphate synthase subunit PdxS, found in Methanothermobacter thermautotrophicus (strain ATCC 29096 / DSM 1053 / JCM 10044 / NBRC 100330 / Delta H) (Methanobacterium thermoautotrophicum).